A 561-amino-acid chain; its full sequence is Protein NRT1/ PTR FAMILY 5.13 (561 aa).

A helical transmembrane segment spans residues 78–98; sequence AWSGISTILPLLGAFVADAFL. A Phosphothreonine modification is found at Thr-103. 10 helical membrane passes run 104-124, 133-153, 183-203, 211-231, 324-344, 361-381, 405-425, 447-467, 486-506, and 530-550; these read IIIA…SAFL, SSPS…VAIG, FFNW…LVVV, WALG…LFVL, IPVW…MTFF, IPPA…VPIY, IGTG…VESK, IWWL…TLVG, AIYL…IYLI, and YFYW…LFIS.

The protein belongs to the major facilitator superfamily. Proton-dependent oligopeptide transporter (POT/PTR) (TC 2.A.17) family. In terms of tissue distribution, expressed in roots, flowers and siliques. Detected in stems and leaves.

The protein localises to the membrane. This is Protein NRT1/ PTR FAMILY 5.13 (NPF5.13) from Arabidopsis thaliana (Mouse-ear cress).